We begin with the raw amino-acid sequence, 207 residues long: FMN-dependent NADH:quinone oxidoreductase 2 (207 aa).

FMN is bound by residues Ser10, 16–18 (SIS), 96–99 (MYNL), and 141–144 (SRGG).

The protein belongs to the azoreductase type 1 family. As to quaternary structure, homodimer. Requires FMN as cofactor.

It carries out the reaction 2 a quinone + NADH + H(+) = 2 a 1,4-benzosemiquinone + NAD(+). The catalysed reaction is N,N-dimethyl-1,4-phenylenediamine + anthranilate + 2 NAD(+) = 2-(4-dimethylaminophenyl)diazenylbenzoate + 2 NADH + 2 H(+). Functionally, quinone reductase that provides resistance to thiol-specific stress caused by electrophilic quinones. Its function is as follows. Also exhibits azoreductase activity. Catalyzes the reductive cleavage of the azo bond in aromatic azo compounds to the corresponding amines. The chain is FMN-dependent NADH:quinone oxidoreductase 2 from Trichormus variabilis (strain ATCC 29413 / PCC 7937) (Anabaena variabilis).